A 320-amino-acid polypeptide reads, in one-letter code: Methionine import ATP-binding protein MetN (320 aa).

The 236-residue stretch at 2–237 folds into the ABC transporter domain; that stretch reads IEIKNVSKYF…PSSEMKKLIG (236 aa). 34–41 is an ATP binding site; the sequence is GHSGAGKS.

The protein belongs to the ABC transporter superfamily. Methionine importer (TC 3.A.1.24) family. As to quaternary structure, the complex is composed of two ATP-binding proteins (MetN), two transmembrane proteins (MetI) and a solute-binding protein (MetQ).

It is found in the cell membrane. The enzyme catalyses L-methionine(out) + ATP + H2O = L-methionine(in) + ADP + phosphate + H(+). The catalysed reaction is D-methionine(out) + ATP + H2O = D-methionine(in) + ADP + phosphate + H(+). In terms of biological role, part of the ABC transporter complex MetNIQ involved in methionine import. Responsible for energy coupling to the transport system. The polypeptide is Methionine import ATP-binding protein MetN (Clostridium acetobutylicum (strain ATCC 824 / DSM 792 / JCM 1419 / IAM 19013 / LMG 5710 / NBRC 13948 / NRRL B-527 / VKM B-1787 / 2291 / W)).